The following is a 351-amino-acid chain: Minor outer capsid protein P9 (351 aa).

A disordered region spans residues 246–330 (GVPAALPQPD…EMDMPDGFHD (85 aa)). The segment covering 285–298 (MIRKKVETSKDAPS) has biased composition (basic and acidic residues). Over residues 315–324 (LEDDMSEMDM) the composition is skewed to acidic residues.

The protein belongs to the phytoreovirus minor outer capsid protein P9 family.

It localises to the virion. The protein localises to the host cytoplasm. In terms of biological role, minor outer capsid protein. This Alopecurus aequalis (Barnyard grass) protein is Minor outer capsid protein P9.